The primary structure comprises 438 residues: UDP-N-acetylmuramoylalanine--D-glutamate ligase (438 aa).

Residue 112–118 (GSNGKST) participates in ATP binding.

The protein belongs to the MurCDEF family.

It localises to the cytoplasm. The catalysed reaction is UDP-N-acetyl-alpha-D-muramoyl-L-alanine + D-glutamate + ATP = UDP-N-acetyl-alpha-D-muramoyl-L-alanyl-D-glutamate + ADP + phosphate + H(+). It functions in the pathway cell wall biogenesis; peptidoglycan biosynthesis. In terms of biological role, cell wall formation. Catalyzes the addition of glutamate to the nucleotide precursor UDP-N-acetylmuramoyl-L-alanine (UMA). This chain is UDP-N-acetylmuramoylalanine--D-glutamate ligase, found in Escherichia coli O6:K15:H31 (strain 536 / UPEC).